Consider the following 636-residue polypeptide: Probable potassium transport system protein Kup (636 aa).

Helical transmembrane passes span leucine 22–tyrosine 42, isoleucine 64–isoleucine 84, leucine 115–proline 135, phenylalanine 150–leucine 170, leucine 182–isoleucine 202, phenylalanine 220–threonine 240, tryptophan 261–leucine 281, leucine 293–isoleucine 313, isoleucine 351–phenylalanine 371, valine 383–leucine 403, proline 408–alanine 428, and isoleucine 433–threonine 453.

This sequence belongs to the HAK/KUP transporter (TC 2.A.72) family.

It localises to the cell inner membrane. The enzyme catalyses K(+)(in) + H(+)(in) = K(+)(out) + H(+)(out). In terms of biological role, transport of potassium into the cell. Likely operates as a K(+):H(+) symporter. The protein is Probable potassium transport system protein Kup of Pseudomonas putida (strain GB-1).